The sequence spans 182 residues: ATP-dependent protease subunit HslV (182 aa).

The active site involves threonine 12. Alanine 167, cysteine 170, and threonine 173 together coordinate Na(+).

The protein belongs to the peptidase T1B family. HslV subfamily. A double ring-shaped homohexamer of HslV is capped on each side by a ring-shaped HslU homohexamer. The assembly of the HslU/HslV complex is dependent on binding of ATP.

It is found in the cytoplasm. It carries out the reaction ATP-dependent cleavage of peptide bonds with broad specificity.. Allosterically activated by HslU binding. Its function is as follows. Protease subunit of a proteasome-like degradation complex believed to be a general protein degrading machinery. In Pelodictyon phaeoclathratiforme (strain DSM 5477 / BU-1), this protein is ATP-dependent protease subunit HslV.